A 428-amino-acid polypeptide reads, in one-letter code: Phosphoribosylamine--glycine ligase (428 aa).

An ATP-grasp domain is found at 109–316; it reads KDFLARHNIP…LVELCLAGTQ (208 aa). 135 to 196 is a binding site for ATP; that stretch reads VRQKGAPIVI…EEFLDGEEAS (62 aa). The Mg(2+) site is built by E286 and N288.

The protein belongs to the GARS family. It depends on Mg(2+) as a cofactor. The cofactor is Mn(2+).

It catalyses the reaction 5-phospho-beta-D-ribosylamine + glycine + ATP = N(1)-(5-phospho-beta-D-ribosyl)glycinamide + ADP + phosphate + H(+). It participates in purine metabolism; IMP biosynthesis via de novo pathway; N(1)-(5-phospho-D-ribosyl)glycinamide from 5-phospho-alpha-D-ribose 1-diphosphate: step 2/2. The sequence is that of Phosphoribosylamine--glycine ligase from Yersinia pestis.